Here is a 486-residue protein sequence, read N- to C-terminus: Cardiolipin synthase A (486 aa).

2 helical membrane-spanning segments follow: residues 3–23 and 38–58; these read IFYNLIKCLIFSTYWLLIANI and MSWLLTIYIIPFIGISIWFFF. PLD phosphodiesterase domains lie at 219-246 and 399-426; these read VDVRQHRKIILIDNYIAYSGSMNLVDPY and QKGLLHSKSILVDQQLSLIGTVNLDMRS. Catalysis depends on residues His224, Lys226, Asp231, His404, Lys406, and Asp411.

It belongs to the phospholipase D family. Cardiolipin synthase subfamily. ClsA sub-subfamily.

It is found in the cell inner membrane. The catalysed reaction is 2 a 1,2-diacyl-sn-glycero-3-phospho-(1'-sn-glycerol) = a cardiolipin + glycerol. Catalyzes the reversible phosphatidyl group transfer from one phosphatidylglycerol molecule to another to form cardiolipin (CL) (diphosphatidylglycerol) and glycerol. In Buchnera aphidicola subsp. Acyrthosiphon pisum (strain 5A), this protein is Cardiolipin synthase A.